A 201-amino-acid chain; its full sequence is CASP-like protein 2B2 (201 aa).

Topologically, residues 1 to 28 are cytoplasmic; it reads MSYLGVGVSPGNVTGSSTKMKLIDRKVR. The chain crosses the membrane as a helical span at residues 29-49; the sequence is VTELILRSLVCAFALVAAILV. At 50 to 71 the chain is on the extracellular side; that stretch reads ATDVQVREIFTIQKKAKFTDMK. A helical membrane pass occupies residues 72 to 92; sequence ALVFLVVINGIAAGYSLVQAV. Residues 93 to 108 lie on the Cytoplasmic side of the membrane; it reads CCLVGLMKGSVLLSEP. A helical transmembrane segment spans residues 109–129; it reads LAWAIFFGDQAVAYLCVAGVA. Residues 130–166 lie on the Extracellular side of the membrane; sequence AAAQSAAFAKLGQPELQWMKICDMYGKFCNQVGEGIA. The helical transmembrane segment at 167–187 threads the bilayer; it reads SALFACIGMVLISCISAFGVF. Over 188–201 the chain is Cytoplasmic; the sequence is RLYGGSKPRQSSRW.

It belongs to the Casparian strip membrane proteins (CASP) family. As to quaternary structure, homodimer and heterodimers.

The protein resides in the cell membrane. The sequence is that of CASP-like protein 2B2 from Arabidopsis lyrata subsp. lyrata (Lyre-leaved rock-cress).